The chain runs to 262 residues: 14-3-3 protein I (262 aa).

The protein belongs to the 14-3-3 family. As to quaternary structure, homodimer. Forms a complex composed of CDPK1, PKA regulatory subunit PKAr and 14-3-3I; the complex is formed in merozoites in response to low extracellular level of K(+) and may play a role in microneme secretion. Interacts with CDPK1 (when phosphorylated) in a Ca(2+)-independent manner; the interaction does not regulate CDPK1 catalytic activity but is required for merozoite invasion of host erythrocytes. Interacts with PKA regulatory subunit PKAr (when phosphorylated) in a Ca(2+)-dependent manner. Interacts with histone H3 (when phosphorylated at 'Ser-28' or when phosphorylated at 'Ser-28' and 'Ser-32').

The protein localises to the cell membrane. The protein resides in the cytoplasm. It localises to the nucleus. In terms of biological role, adapter protein which binds to its partners, usually via a phosphoserine or phosphothreonine motif. Binding generally results in the modulation of the activity and/or cellular localization of the binding partner. Via its interaction with CDPK1 and PKAr, involved in merozoite microneme secretion and thus in merozoite invasion of host erythrocytes. The protein is 14-3-3 protein I of Plasmodium falciparum (isolate 3D7).